The following is a 503-amino-acid chain: TGF-beta receptor type-1 (503 aa).

Positions M1–A29 are cleaved as a signal peptide. Topologically, residues L30 to L126 are extracellular. Disulfide bonds link C32–C50, C34–C37, C44–C67, C82–C96, and C97–C102. N41 carries N-linked (GlcNAc...) asparagine glycosylation. The chain crosses the membrane as a helical span at residues A127–I147. The Cytoplasmic portion of the chain corresponds to C148–M503. Position 165 is a phosphoserine (S165). A GS domain is found at T175–T204. Phosphothreonine; by TGFBR2 is present on residues T185 and T186. 3 positions are modified to phosphoserine; by TGFBR2: S187, S189, and S191. The FKBP1A-binding motif lies at L193–P194. The region spanning I205–L495 is the Protein kinase domain. ATP-binding positions include I211–V219 and K232. A Glycyl lysine isopeptide (Lys-Gly) (interchain with G-Cter in ubiquitin) cross-link involves residue K268. D333 functions as the Proton acceptor in the catalytic mechanism. Residue K391 forms a Glycyl lysine isopeptide (Lys-Gly) (interchain with G-Cter in SUMO) linkage.

This sequence belongs to the protein kinase superfamily. TKL Ser/Thr protein kinase family. TGFB receptor subfamily. As to quaternary structure, homodimer; in the endoplasmic reticulum but also at the cell membrane. Heterohexamer; TGFB1, TGFB2 and TGFB3 homodimeric ligands assemble a functional receptor composed of two TGFBR1 and TGFBR2 heterodimers to form a ligand-receptor heterohexamer. The respective affinity of TGBRB1 and TGFBR2 for the ligands may modulate the kinetics of assembly of the receptor and may explain the different biological activities of TGFB1, TGFB2 and TGFB3. Component of a complex composed of TSC22D1 (via N-terminus), TGFBR1 and TGFBR2; the interaction between TSC22D1 and TGFBR1 is inhibited by SMAD7 and promoted by TGFB1. Interacts with CD109; inhibits TGF-beta receptor activation in keratinocytes. Interacts with RBPMS. Interacts (unphosphorylated) with FKBP1A; prevents TGFBR1 phosphorylation by TGFBR2 and stabilizes it in the inactive conformation. Interacts with SMAD2, SMAD3 and ZFYVE9; ZFYVE9 recruits SMAD2 and SMAD3 to the TGF-beta receptor. Interacts with TRAF6 and MAP3K7; induces MAP3K7 activation by TRAF6. Interacts with PARD6A; involved in TGF-beta induced epithelial to mesenchymal transition. Interacts with NEDD4L. Interacts with SMAD7, SMURF1 and SMURF2; SMAD7 recruits NEDD4L, SMURF1 and SMURF2 to the TGF-beta receptor. Interacts with USP15 and VPS39. Interacts with SDCBP (via C-terminus). Interacts with CAV1 and this interaction is impaired in the presence of SDCBP. Interacts with APPL1; interaction is TGF beta dependent; mediates trafficking of the TGFBR1 from the endosomes to the nucleus via microtubules in a TRAF6-dependent manner. Interacts with GPR50; this interaction promotes the constitutive activation of SMAD signaling pathway. Mg(2+) serves as cofactor. Requires Mn(2+) as cofactor. Phosphorylated at basal levels in the absence of ligand. Activated upon phosphorylation by TGFBR2, mainly in the GS domain. Phosphorylation in the GS domain abrogates FKBP1A-binding. Post-translationally, N-Glycosylated. In terms of processing, ubiquitinated; undergoes ubiquitination catalyzed by several E3 ubiquitin ligases including SMURF1, SMURF2 and NEDD4L2. Results in the proteasomal and/or lysosomal degradation of the receptor thereby negatively regulating its activity. Deubiquitinated by USP15, leading to stabilization of the protein and enhanced TGF-beta signal. Its ubiquitination and proteasome-mediated degradation is negatively regulated by SDCBP. Ubiquitinated by BFAR via'Lys-63'-linked ubiquitination at Lys-268, leading to TGF-beta signaling activation.

It is found in the cell membrane. The protein localises to the cell junction. The protein resides in the tight junction. It localises to the membrane raft. Its subcellular location is the cell surface. It carries out the reaction L-threonyl-[receptor-protein] + ATP = O-phospho-L-threonyl-[receptor-protein] + ADP + H(+). The catalysed reaction is L-seryl-[receptor-protein] + ATP = O-phospho-L-seryl-[receptor-protein] + ADP + H(+). With respect to regulation, kept in an inactive conformation by FKBP1A preventing receptor activation in absence of ligand. CD109 is another inhibitor of the receptor. In terms of biological role, transmembrane serine/threonine kinase forming with the TGF-beta type II serine/threonine kinase receptor, TGFBR2, the non-promiscuous receptor for the TGF-beta cytokines TGFB1, TGFB2 and TGFB3. Transduces the TGFB1, TGFB2 and TGFB3 signal from the cell surface to the cytoplasm and is thus regulating a plethora of physiological and pathological processes including cell cycle arrest in epithelial and hematopoietic cells, control of mesenchymal cell proliferation and differentiation, wound healing, extracellular matrix production, immunosuppression and carcinogenesis. The formation of the receptor complex composed of 2 TGFBR1 and 2 TGFBR2 molecules symmetrically bound to the cytokine dimer results in the phosphorylation and the activation of TGFBR1 by the constitutively active TGFBR2. Activated TGFBR1 phosphorylates SMAD2 which dissociates from the receptor and interacts with SMAD4. The SMAD2-SMAD4 complex is subsequently translocated to the nucleus where it modulates the transcription of the TGF-beta-regulated genes. This constitutes the canonical SMAD-dependent TGF-beta signaling cascade. Also involved in non-canonical, SMAD-independent TGF-beta signaling pathways. For instance, TGFBR1 induces TRAF6 autoubiquitination which in turn results in MAP3K7 ubiquitination and activation to trigger apoptosis. Also regulates epithelial to mesenchymal transition through a SMAD-independent signaling pathway through PARD6A phosphorylation and activation. The polypeptide is TGF-beta receptor type-1 (Tgfbr1) (Mus musculus (Mouse)).